A 254-amino-acid polypeptide reads, in one-letter code: Methyl-CpG-binding domain-containing protein 11 (254 aa).

An MBD domain is found at 4–74 (EEEVVSVELP…AEFDWTTSGT (71 aa)). The disordered stretch occupies residues 56–254 (KSHPGNPAIA…EKTAEGEATG (199 aa)). Basic and acidic residues-rich tracts occupy residues 80–97 (RISEKTKATPSPDKEPPK), 107–130 (SKKDAEGEKSEGGGEENSHVKDTE), 151–162 (ETERVNDAKENI), and 178–254 (ESMK…EATG). At Ser-116 the chain carries Phosphoserine.

Expressed in leaves (around hydathodes), buds, flowers (carpels and pollen grains), stems (around nodes), siliques, mature seeds and roots.

It is found in the nucleus. In terms of biological role, transcriptional regulator that binds DNA independently of its methylation status. Required during plant organogenesis and development. The chain is Methyl-CpG-binding domain-containing protein 11 (MBD11) from Arabidopsis thaliana (Mouse-ear cress).